The chain runs to 312 residues: Acetyl-coenzyme A carboxylase carboxyl transferase subunit alpha (312 aa).

The CoA carboxyltransferase C-terminal domain maps to 25 to 286 (GDDSAVEILK…GNYIIEKLNE (262 aa)).

This sequence belongs to the AccA family. As to quaternary structure, acetyl-CoA carboxylase is a heterohexamer composed of biotin carboxyl carrier protein (AccB), biotin carboxylase (AccC) and two subunits each of ACCase subunit alpha (AccA) and ACCase subunit beta (AccD).

It is found in the cytoplasm. It catalyses the reaction N(6)-carboxybiotinyl-L-lysyl-[protein] + acetyl-CoA = N(6)-biotinyl-L-lysyl-[protein] + malonyl-CoA. It functions in the pathway lipid metabolism; malonyl-CoA biosynthesis; malonyl-CoA from acetyl-CoA: step 1/1. Functionally, component of the acetyl coenzyme A carboxylase (ACC) complex. First, biotin carboxylase catalyzes the carboxylation of biotin on its carrier protein (BCCP) and then the CO(2) group is transferred by the carboxyltransferase to acetyl-CoA to form malonyl-CoA. The chain is Acetyl-coenzyme A carboxylase carboxyl transferase subunit alpha from Campylobacter hominis (strain ATCC BAA-381 / DSM 21671 / CCUG 45161 / LMG 19568 / NCTC 13146 / CH001A).